Consider the following 262-residue polypeptide: Glutamate 5-kinase (262 aa).

ATP is bound at residue K14. Substrate contacts are provided by S54, D141, and N153. Residues 173–174 and 214–220 each bind ATP; these read SD and TGGMVTK.

The protein belongs to the glutamate 5-kinase family.

Its subcellular location is the cytoplasm. The enzyme catalyses L-glutamate + ATP = L-glutamyl 5-phosphate + ADP. Its pathway is amino-acid biosynthesis; L-proline biosynthesis; L-glutamate 5-semialdehyde from L-glutamate: step 1/2. Functionally, catalyzes the transfer of a phosphate group to glutamate to form L-glutamate 5-phosphate. The chain is Glutamate 5-kinase from Symbiobacterium thermophilum (strain DSM 24528 / JCM 14929 / IAM 14863 / T).